Here is a 960-residue protein sequence, read N- to C-terminus: Endosome/lysosome-associated apoptosis and autophagy regulator family member 2 (960 aa).

Positions 1 to 26 (MLFLRPGPARGRGRGRPARAPHSGLS) are disordered. Residues 1-44 (MLFLRPGPARGRGRGRPARAPHSGLSPPWSPAWICCWALAGCQA) form the signal peptide. Topologically, residues 45-860 (AWAGAGDLPS…TCETVDFWLK (816 aa)) are extracellular. N-linked (GlcNAc...) asparagine glycosylation occurs at asparagine 171. Disulfide bonds link cysteine 295–cysteine 312, cysteine 325–cysteine 348, and cysteine 328–cysteine 360. 2 N-linked (GlcNAc...) asparagine glycosylation sites follow: asparagine 407 and asparagine 622. The 212-residue stretch at 597–808 (PTCPYIRSMA…LWESVEACPL (212 aa)) folds into the MRH domain. 4 cysteine pairs are disulfide-bonded: cysteine 599/cysteine 651, cysteine 661/cysteine 689, cysteine 758/cysteine 794, and cysteine 770/cysteine 806. Residues 861–881 (VGAGVGAFTAVLLVALTCYFW) form a helical membrane-spanning segment. The Cytoplasmic segment spans residues 882 to 960 (KKNQKLEYKY…QLKSSRSPNI (79 aa)). Position 949 is a phosphoserine (serine 949).

This sequence belongs to the ELAPOR family.

Its subcellular location is the cell membrane. Its function is as follows. Functions as a regulator of the BMP signaling pathway and may be involved in epidermal differentiation. The protein is Endosome/lysosome-associated apoptosis and autophagy regulator family member 2 of Bos taurus (Bovine).